A 509-amino-acid chain; its full sequence is Poly(A) RNA polymerase GLD2-A (509 aa).

Residues 88–107 (PGSPSSSFQNRKRRSDEGNV) form a disordered region. Residues Asp240 and Asp242 each contribute to the Mg(2+) site. The PAP-associated domain occupies 409–462 (LGDLLLGFLKYFAVEFDWSKDIISVREGKALPRSDDYLWRNKYICVEEPFDGTN).

It belongs to the DNA polymerase type-B-like family. GLD2 subfamily. Component of a complex at least composed of cpeb1, cpsf1, tent2/gld2, pabpc1/ePAB, parn and sympk. Following oocyte maturation, parn is expelled from the complex. Interacts with rbfox2 and sympk. Requires Mg(2+) as cofactor. Mn(2+) serves as cofactor.

The protein resides in the cytoplasm. The catalysed reaction is RNA(n) + ATP = RNA(n)-3'-adenine ribonucleotide + diphosphate. Functionally, cytoplasmic poly(A) RNA polymerase that adds successive AMP monomers to the 3'-end of specific RNAs, forming a poly(A) tail. In contrast to the canonical nuclear poly(A) RNA polymerase, it only adds poly(A) to selected cytoplasmic mRNAs during oocyte maturation. Plays a central role during oocyte maturation by mediating polyadenylation of dormant mRNAs, which contain 5'AAUAAA-3' sequence in their 3'UTR. In immature oocytes, polyadenylation of poly(A) tails is counteracted by the ribonuclease parn. During maturation parn is excluded from the ribonucleoprotein complex, allowing poly(A) elongation and activation of mRNAs. May not play a role in replication-dependent histone mRNA degradation. This chain is Poly(A) RNA polymerase GLD2-A (tent2-a), found in Xenopus laevis (African clawed frog).